Consider the following 347-residue polypeptide: Olfactory receptor 2M2 (347 aa).

At 1–25 the chain is on the extracellular side; it reads MAWENQTFNSDFILLGIFNHSPPHT. N-linked (GlcNAc...) asparagine glycosylation occurs at N5. The helical transmembrane segment at 26–49 threads the bilayer; that stretch reads FLFFLVLGIFLVAFMGNSVMVLLI. Over 50–57 the chain is Cytoplasmic; the sequence is YLDTQLHT. A helical membrane pass occupies residues 58 to 79; that stretch reads PMYFLLSQLSLMDLMLICTTVP. Over 80 to 100 the chain is Extracellular; the sequence is KMAFNYLSGSKSISMAGCVTQ. The cysteines at positions 97 and 189 are disulfide-linked. Residues 101–120 form a helical membrane-spanning segment; that stretch reads IFFYISLSGSECFLLAVMAY. The Cytoplasmic segment spans residues 121–139; it reads DRYIAICHPLRYTNLMNPK. The chain crosses the membrane as a helical span at residues 140–158; it reads ICGLMATFSWILGSTDGII. Residues 159–195 lie on the Extracellular side of the membrane; sequence DAVATFSFSFCGSREIAHFFCEFPSLLILSCNDTSIF. An N-linked (GlcNAc...) asparagine glycan is attached at N190. The helical transmembrane segment at 196-219 threads the bilayer; it reads EEVIFICCIVMLVFPVAIIIASYA. Topologically, residues 220-236 are cytoplasmic; that stretch reads RVILAVIHMGSGEGRCK. Residues 237–259 traverse the membrane as a helical segment; sequence AFTTCSSHLMVVGMYYGAALFMY. The Extracellular segment spans residues 260–272; the sequence is IRPTSDHSPTQDK. Residues 273–292 form a helical membrane-spanning segment; sequence MVSVFYTILTPMLNPLIYSL. The Cytoplasmic portion of the chain corresponds to 293–347; sequence RNKEVTRAFMKILGKGKSESELPHKLYVLLFAKFFFLISIFFYDVKILALIMYIA.

The protein belongs to the G-protein coupled receptor 1 family.

Its subcellular location is the cell membrane. Odorant receptor. This is Olfactory receptor 2M2 (OR2M2) from Homo sapiens (Human).